A 487-amino-acid polypeptide reads, in one-letter code: Lysophospholipid acyltransferase 5 (487 aa).

At alanine 2 the chain carries N-acetylalanine. A run of 4 helical transmembrane segments spans residues 44–64 (LIFS…YLFY), 84–104 (FNFG…FLIL), 111–131 (VTAV…GYYY), and 180–200 (GVPS…FLVG). N-linked (GlcNAc...) asparagine glycosylation is present at asparagine 225. Helical transmembrane passes span 236-256 (LGLV…DDYL) and 285-305 (VTCW…FNGF). Residues asparagine 308 and asparagine 331 are each glycosylated (N-linked (GlcNAc...) asparagine). Active-site residues include asparagine 338 and histidine 374. The next 3 membrane-spanning stretches (helical) occupy residues 364 to 384 (GLSL…LICF), 422 to 442 (LVQQ…FCLF), and 453 to 473 (SIYF…PYIH). Residues 484-487 (KKRE) carry the Di-lysine motif motif.

The protein belongs to the membrane-bound acyltransferase family. As to expression, detected ubiquitously, with high expression levels in small intestine, brown adipose tissue, liver, kidney and testis. Expressed in liver and both proximal and distal small intestine (at protein level). Expressed in peritoneal macrophages.

It localises to the endoplasmic reticulum membrane. The enzyme catalyses a 1-acyl-sn-glycero-3-phosphocholine + an acyl-CoA = a 1,2-diacyl-sn-glycero-3-phosphocholine + CoA. It carries out the reaction a 1-acyl-sn-glycero-3-phosphoethanolamine + an acyl-CoA = a 1,2-diacyl-sn-glycero-3-phosphoethanolamine + CoA. It catalyses the reaction a 1-acyl-sn-glycero-3-phospho-L-serine + an acyl-CoA = a 1,2-diacyl-sn-glycero-3-phospho-L-serine + CoA. The catalysed reaction is (9Z,12Z)-octadecadienoyl-CoA + a 1-acyl-sn-glycero-3-phosphocholine = 1-acyl-2-(9Z,12Z)-octadecadienoyl-sn-glycero-3-phosphocholine + CoA. The enzyme catalyses (5Z,8Z,11Z,14Z)-eicosatetraenoyl-CoA + a 1-acyl-sn-glycero-3-phosphocholine = 1-acyl-2-(5Z,8Z,11Z,14Z-eicosatetraenoyl)-sn-glycero-3-phosphocholine + CoA. It carries out the reaction dodecanoyl-CoA + 1-hexadecanoyl-sn-glycero-3-phosphocholine = 1-hexadecanoyl-2-dodecanoyl-sn-glycero-3-phosphocholine + CoA. It catalyses the reaction octadecanoyl-CoA + 1-hexadecanoyl-sn-glycero-3-phosphocholine = 1-hexadecanoyl-2-octadecanoyl-sn-glycero-3-phosphocholine + CoA. The catalysed reaction is 1-dodecanoyl-sn-glycero-3-phosphocholine + hexadecanoyl-CoA = 1-dodecanoyl-2-hexadecanoyl-sn-glycero-3-phosphocholine + CoA. The enzyme catalyses 1-tetradecanoyl-sn-glycero-3-phosphocholine + hexadecanoyl-CoA = 1-tetradecanoyl-2-hexadecanoyl-sn-glycero-3-phosphocholine + CoA. It carries out the reaction 1-hexadecanoyl-sn-glycero-3-phosphocholine + hexadecanoyl-CoA = 1,2-dihexadecanoyl-sn-glycero-3-phosphocholine + CoA. It catalyses the reaction 1-octadecanoyl-sn-glycero-3-phosphocholine + hexadecanoyl-CoA = 1-octadecanoyl-2-hexadecanoyl-sn-glycero-3-phosphocholine + CoA. The catalysed reaction is 1-(9Z-octadecenoyl)-sn-glycero-3-phosphocholine + hexadecanoyl-CoA = 1-(9Z-octadecenoyl)-2-hexadecanoyl-sn-glycero-3-phosphocholine + CoA. The enzyme catalyses (9Z)-hexadecenoyl-CoA + 1-hexadecanoyl-sn-glycero-3-phosphocholine = 1-hexadecanoyl-2-(9Z-hexadecenoyl)-sn-glycero-3-phosphocholine + CoA. It carries out the reaction 1-hexadecanoyl-sn-glycero-3-phosphocholine + (9Z)-octadecenoyl-CoA = 1-hexadecanoyl-2-(9Z-octadecenoyl)-sn-glycero-3-phosphocholine + CoA. It catalyses the reaction (9Z,12Z)-octadecadienoyl-CoA + 1-hexadecanoyl-sn-glycero-3-phosphocholine = 1-hexadecanoyl-2-(9Z,12Z-octadecadienoyl)-sn-glycero-3-phosphocholine + CoA. The catalysed reaction is 1-dodecanoyl-sn-glycero-3-phosphocholine + (5Z,8Z,11Z,14Z)-eicosatetraenoyl-CoA = 1-dodecanoyl-2-(5Z,8Z,11Z,14Z)-eicosatetraenoyl-sn-glycero-3-phosphocholine + CoA. The enzyme catalyses (5Z,8Z,11Z,14Z)-eicosatetraenoyl-CoA + 1-hexadecanoyl-sn-glycero-3-phosphocholine = 1-hexadecanoyl-2-(5Z,8Z,11Z,14Z-eicosatetraenoyl)-sn-glycero-3-phosphocholine + CoA. It carries out the reaction 1-octadecanoyl-sn-glycero-3-phosphocholine + (5Z,8Z,11Z,14Z)-eicosatetraenoyl-CoA = 1-octadecanoyl-2-(5Z,8Z,11Z,14Z-eicosatetraenoyl)-sn-glycero-3-phosphocholine + CoA. It catalyses the reaction 1-eicosanoyl-sn-glycero-3-phosphocholine + (5Z,8Z,11Z,14Z)-eicosatetraenoyl-CoA = 1-eicosanoyl-2-(5Z,8Z,11Z,14Z)-eicosatetraenoyl-sn-glycero-3-phosphocholine + CoA. The catalysed reaction is 1-(9Z-octadecenoyl)-sn-glycero-3-phosphocholine + (9Z)-octadecenoyl-CoA = 1,2-di-(9Z-octadecenoyl)-sn-glycero-3-phosphocholine + CoA. The enzyme catalyses 1-(9Z-octadecenoyl)-sn-glycero-3-phosphocholine + (9Z,12Z)-octadecadienoyl-CoA = 1-(9Z)-octadecenoyl-2-(9Z,12Z)-octadecadienoyl-sn-glycero-3-phosphocholine + CoA. It carries out the reaction 1-(9Z-octadecenoyl)-sn-glycero-3-phosphocholine + (5Z,8Z,11Z,14Z)-eicosatetraenoyl-CoA = 1-(9Z)-octadecenoyl-2-(5Z,8Z,11Z,14Z)-icosatetraenoyl-sn-glycero-3-phosphocholine + CoA. It catalyses the reaction a 1-acyl-sn-glycero-3-phosphoethanolamine + (9Z,12Z)-octadecadienoyl-CoA = 1-acyl-2-(9Z,12Z)-octadecadienoyl-sn-glycero-3-phosphoethanolamine + CoA. The catalysed reaction is 1-(9Z-octadecenoyl)-sn-glycero-3-phosphoethanolamine + (9Z,12Z)-octadecadienoyl-CoA = 1-(9Z)-octadecenoyl-2-(9Z,12Z)-octadecadienoyl-sn-glycero-3-phosphoethanolamine + CoA. The enzyme catalyses 1-(10Z-heptadecenoyl)-sn-glycero-3-phosphoethanolamine + (9Z,12Z)-octadecadienoyl-CoA = 1-(10Z-heptadecenoyl)-2-(9Z,12Z-octadecadienoyl)-sn-glycero-3-phosphoethanolamine + CoA. It carries out the reaction a 1-acyl-sn-glycero-3-phosphoethanolamine + (5Z,8Z,11Z,14Z)-eicosatetraenoyl-CoA = 1-acyl-2-(5Z,8Z,11Z,14Z)-eicosatetraenoyl-sn-glycero-3-phosphoethanolamine + CoA. It catalyses the reaction 1-hexadecanoyl-sn-glycero-3-phosphoethanolamine + (5Z,8Z,11Z,14Z)-eicosatetraenoyl-CoA = 1-hexadecanoyl-2-(5Z,8Z,11Z,14Z-eicosatetraenoyl)-sn-glycero-3-phosphoethanolamine + CoA. The catalysed reaction is 1-(9Z-octadecenoyl)-sn-glycero-3-phosphoethanolamine + (5Z,8Z,11Z,14Z)-eicosatetraenoyl-CoA = 1-(9Z)-octadecenoyl-2-(5Z,8Z,11Z,14Z)-eicosatetraenoyl-sn-glycero-3-phosphoethanolamine + CoA. The enzyme catalyses 1-(10Z-heptadecenoyl)-sn-glycero-3-phosphoethanolamine + (5Z,8Z,11Z,14Z)-eicosatetraenoyl-CoA = 1-(10Z-heptadecenoyl)-2-(5Z,8Z,11Z,14Z-eicosatetraenoyl)-sn-glycero-3-phosphoethanolamine + CoA. It carries out the reaction a 1-O-(1Z-alkenyl)-sn-glycero-3-phosphoethanolamine + (5Z,8Z,11Z,14Z)-eicosatetraenoyl-CoA = 1-O-(1Z)-alkenyl-2-(5Z,8Z,11Z,14Z)-eicosatetraenoyl-sn-glycero-3-phosphoethanolamine + CoA. It catalyses the reaction a 1-acyl-sn-glycero-3-phospho-L-serine + (9Z,12Z)-octadecadienoyl-CoA = 1-acyl-2-(9Z,12Z-octadecadienoyl)-sn-glycero-3-phospho-L-serine + CoA. The catalysed reaction is a 1-acyl-sn-glycero-3-phospho-L-serine + (5Z,8Z,11Z,14Z)-eicosatetraenoyl-CoA = 1-acyl-2-(5Z,8Z,11Z,14Z-eicosatetraenoyl)-sn-glycero-3-phospho-L-serine + CoA. The enzyme catalyses 1-hexadecanoyl-sn-glycero-3-phospho-L-serine + (9Z)-octadecenoyl-CoA = 1-hexadecanoyl-2-(9Z-octadecenoyl)-sn-glycero-3-phospho-L-serine + CoA. It carries out the reaction 1-(9Z-octadecenoyl)-sn-glycero-3-phospho-L-serine + (9Z)-octadecenoyl-CoA = 1,2-di-(9Z)-octadecenoyl-sn-glycero-3-phospho-L-serine + CoA. It catalyses the reaction 1-hexadecanoyl-sn-glycero-3-phospho-L-serine + (9Z,12Z)-octadecadienoyl-CoA = 1-hexadecanoyl-2-(9Z,12Z-octadecadienoyl)-sn-glycero-3-phospho-L-serine + CoA. The catalysed reaction is 1-(9Z-octadecenoyl)-sn-glycero-3-phospho-L-serine + (9Z,12Z)-octadecadienoyl-CoA = 1-(9Z-octadecenoyl)-2-(9Z,12Z-octadienoyl)-sn-glycero-3-phospho-L-serine + CoA. The enzyme catalyses 1-hexadecanoyl-sn-glycero-3-phospho-L-serine + (5Z,8Z,11Z,14Z)-eicosatetraenoyl-CoA = 1-hexadecanoyl-2-(5Z,8Z,11Z,14Z-eicosatetraenoyl)-sn-glycero-3-phospho-L-serine + CoA. It carries out the reaction 1-(9Z-octadecenoyl)-sn-glycero-3-phospho-L-serine + (5Z,8Z,11Z,14Z)-eicosatetraenoyl-CoA = 1-(9Z-octadecenoyl)-2-(5Z,8Z,11Z,14Z-eicosatetraenoyl)-sn-glycero-3-phospho-L-serine + CoA. The protein operates within lipid metabolism; phospholipid metabolism. Functionally, lysophospholipid O-acyltransferase (LPLAT) that catalyzes the reacylation step of the phospholipid remodeling process also known as the Lands cycle. Catalyzes transfer of the fatty acyl chain from fatty acyl-CoA to 1-acyl lysophospholipid to form various classes of phospholipids. Converts 1-acyl lysophosphatidylcholine (LPC) into phosphatidylcholine (PC) (LPCAT activity), 1-acyl lysophosphatidylserine (LPS) into phosphatidylserine (PS) (LPSAT activity) and 1-acyl lysophosphatidylethanolamine (LPE) into phosphatidylethanolamine (PE) (LPEAT activity). Favors polyunsaturated fatty acyl-CoAs as acyl donors compared to saturated fatty acyl-CoAs. Has higher activity for LPC acyl acceptors compared to LPEs and LPSs. Can also transfer the fatty acyl chain from fatty acyl-CoA to 1-O-alkyl lysophospholipid or 1-O-alkenyl lysophospholipid with lower efficiency. Acts as a major LPC O-acyltransferase in liver and intestine. As a component of the liver X receptor/NR1H3 or NR1H2 signaling pathway, mainly catalyzes the incorporation of arachidonate into PCs of endoplasmic reticulum (ER) membranes, increasing membrane dynamics and enabling triacylglycerols transfer to nascent very low-density lipoprotein (VLDL) particles. Promotes processing of sterol regulatory protein SREBF1 in hepatocytes, likely by facilitating the translocation of SREBF1-SCAP complex from ER to the Golgi apparatus. Participates in mechanisms by which the liver X receptor/NR1H3 or NR1H2 signaling pathway counteracts lipid-induced ER stress response and inflammation. Down-regulates hepatic inflammation by limiting arachidonic acid availability for synthesis of inflammatory eicosanoids, such as prostaglandins. In enterocytes, acts as a component of a gut-brain feedback loop that coordinates dietary lipid absorption and food intake. Regulates the abundance of PCs containing linoleate and arachidonate in enterocyte membranes, enabling passive diffusion of fatty acids and cholesterol across the membrane for efficient chylomicron assembly. In the intestinal crypt, acts as a component of dietary-responsive phospholipid-cholesterol axis, regulating the biosynthesis of cholesterol and its mitogenic effects on intestinal stem cells. The chain is Lysophospholipid acyltransferase 5 (Lpcat3) from Mus musculus (Mouse).